The following is a 27-amino-acid chain: Cupiennin-3d (27 aa).

E27 carries the glutamic acid 1-amide modification.

Expressed by the venom gland.

It is found in the secreted. The chain is Cupiennin-3d from Cupiennius salei (American wandering spider).